The following is a 410-amino-acid chain: MALVNEHFLKLPGSYLFSDIAKKVNTFKITHPKQDIIRLGIGDVTQPLPKACIEAMHKAVEELASKDTFRGYGPEQGYDFLIEAIIKNDFAPRGIHFSPSEIFVNDGAKSDTGNIGDILRHDNSVGVTDPIYPVYIDSNVMCGRAGVLEEGTGKWSNVTYMPCTSENDFIPEIPDKRIDIVYLCYPNNPTGTTLTKPELKKWVDYALANDTLILFDAAYEAYIQDADVPHSIYEIKGAKKCAIEFRSFSKTAGFTGVRCGYTVVPKELTAATLEGDRIPLNKLWNRRQCTKFNGTSYITQRAAEAVYSTEGKAQIKETINYYMSNAKIMKEGLEATGLKVYGGVNAPYLWVKTPNGLSSWRFFEQMLYEANVVGTPGVGFGPSGEGYIRLTAFGDHNDCMEAMRRIKNWL.

Positions 15 and 42 each coordinate substrate. Residues Tyr-72, 108–109 (AK), Tyr-132, Asn-188, Tyr-219, and 247–249 (SFS) each bind pyridoxal 5'-phosphate. Residues Lys-109, Tyr-132, and Asn-188 each contribute to the substrate site. Lys-250 carries the N6-(pyridoxal phosphate)lysine modification. Positions 258 and 293 each coordinate pyridoxal 5'-phosphate. Asn-293 and Arg-389 together coordinate substrate.

Belongs to the class-I pyridoxal-phosphate-dependent aminotransferase family. LL-diaminopimelate aminotransferase subfamily. As to quaternary structure, homodimer. Pyridoxal 5'-phosphate is required as a cofactor.

It carries out the reaction (2S,6S)-2,6-diaminopimelate + 2-oxoglutarate = (S)-2,3,4,5-tetrahydrodipicolinate + L-glutamate + H2O + H(+). It participates in amino-acid biosynthesis; L-lysine biosynthesis via DAP pathway; LL-2,6-diaminopimelate from (S)-tetrahydrodipicolinate (aminotransferase route): step 1/1. In terms of biological role, involved in the synthesis of meso-diaminopimelate (m-DAP or DL-DAP), required for both lysine and peptidoglycan biosynthesis. Catalyzes the direct conversion of tetrahydrodipicolinate to LL-diaminopimelate. In Bacteroides thetaiotaomicron (strain ATCC 29148 / DSM 2079 / JCM 5827 / CCUG 10774 / NCTC 10582 / VPI-5482 / E50), this protein is LL-diaminopimelate aminotransferase.